The sequence spans 464 residues: Hydrogen cyanide synthase subunit HcnB (464 aa).

Heterotrimer of HcnA, HcnB and HcnC.

It localises to the cell membrane. It carries out the reaction glycine + 2 A = hydrogen cyanide + 2 AH2 + CO2. Its activity is regulated as follows. Oxygen is necessary for cyanogenesis. Activated by succinate, glycine methyl ester, glucose and D,L-methionine in addition to glycine. Phenazine methosulfate, methylene blue, 2,6-dichlorophenolindophenol (DCIP) and ferricyanide can replace oxygen for the reaction. Inhibited by pyrrolnitrin and acriflavine at 1 mM concentration. In terms of biological role, a three-component membrane-bound flavoenzyme that catalyzes the formation of hydrogen cyanide, a secondary metabolite, by transfer of electrons to a cyanide-resistant branch of the aerobic respiratory chain. In Pseudomonas aeruginosa (strain ATCC 15692 / DSM 22644 / CIP 104116 / JCM 14847 / LMG 12228 / 1C / PRS 101 / PAO1), this protein is Hydrogen cyanide synthase subunit HcnB.